A 274-amino-acid polypeptide reads, in one-letter code: Short-chain dehydrogenase/reductase bsc3 (274 aa).

NADP(+) contacts are provided by Ile-14, Tyr-170, Lys-174, Ile-203, and Thr-205. Residue Tyr-170 is the Proton donor of the active site. Lys-174 serves as the catalytic Lowers pKa of active site Tyr.

This sequence belongs to the short-chain dehydrogenases/reductases (SDR) family.

Its pathway is mycotoxin biosynthesis. Its function is as follows. Short-chain dehydrogenase/reductase; part of the gene cluster that mediates the biosynthesis of the diterpene glucoside brassicicene C. In the first step of the brassicicene C biosynthesis, the bifunctional diterpene synthase bsc8 that possesses both prenyl transferase and terpene cyclase activity, converts isopentenyl diphosphate and dimethylallyl diphosphate into geranylgeranyl diphosphate (GGDP) that is further converted into fusicocca-2,10(14)-diene, the first precursor for brassicicene C. Fusicocca-2,10(14)-diene is then substrate of cytochrome P450 monooxygenase bsc1 for hydroxylation at the C-8 position. Oxidation at C-16 position to aldehyde is then catalyzed by the cytochrome P450 monooyxygenase bsc7, yielding fusicocca-2,10(14)-diene-8-beta,16-diol. Follows the isomerization of the double bond and reduction of aldehyde to alcohol catalyzed by the short-chain dehydrogenase/reductase bsc3 to yield the diol compound fusicocca-1,10(14)-diene-8 beta,16-diol. The next step is the oxidation at the C-3 position of fusicocca-2,10(14)-diene-8-beta,16-diol catalyzed by the alpha-ketoglutarate dependent dioxygenase bsc9, to produce a triol compound. Methylation of the hydroxy group at position 16 is performed by the methyltransferase bsc6. 16-O-methylation is followed by oxidation at the C-13 position to ketone and an alkyl shift of the methyl group leads to brassicicene C. Although the probable acetyltransferase bsc4 is included in the gene cluster, no acetylation reactions are necessary for brassicicene C biosynthesis. However, the fact that brassicicene E, which is a structurally related compound having an acetoxy group at position 12, was previously isolated from another strain of A.brassicicola suggests that the ATCC 96836 strain might also produce a small amount of brassicicene E. This is Short-chain dehydrogenase/reductase bsc3 from Alternaria brassicicola (Dark leaf spot agent).